The following is a 239-amino-acid chain: 1-(5-phosphoribosyl)-5-[(5-phosphoribosylamino)methylideneamino] imidazole-4-carboxamide isomerase (239 aa).

Residue D8 is the Proton acceptor of the active site. The active-site Proton donor is D129.

The protein belongs to the HisA/HisF family.

It localises to the cytoplasm. The enzyme catalyses 1-(5-phospho-beta-D-ribosyl)-5-[(5-phospho-beta-D-ribosylamino)methylideneamino]imidazole-4-carboxamide = 5-[(5-phospho-1-deoxy-D-ribulos-1-ylimino)methylamino]-1-(5-phospho-beta-D-ribosyl)imidazole-4-carboxamide. The protein operates within amino-acid biosynthesis; L-histidine biosynthesis; L-histidine from 5-phospho-alpha-D-ribose 1-diphosphate: step 4/9. The polypeptide is 1-(5-phosphoribosyl)-5-[(5-phosphoribosylamino)methylideneamino] imidazole-4-carboxamide isomerase (Paramagnetospirillum magneticum (strain ATCC 700264 / AMB-1) (Magnetospirillum magneticum)).